Reading from the N-terminus, the 235-residue chain is Serine protease SplA (235 aa).

An N-terminal signal peptide occupies residues 1–35; sequence MNKNVMVKGLTALDILTSLGCAENISDQPHSIAKA. Catalysis depends on charge relay system residues histidine 74, aspartate 113, and serine 189.

The protein belongs to the peptidase S1B family.

It localises to the secreted. The sequence is that of Serine protease SplA (splA) from Staphylococcus aureus.